The sequence spans 150 residues: Large ribosomal subunit protein bL9 (150 aa).

This sequence belongs to the bacterial ribosomal protein bL9 family.

Its function is as follows. Binds to the 23S rRNA. The chain is Large ribosomal subunit protein bL9 from Limosilactobacillus fermentum (strain NBRC 3956 / LMG 18251) (Lactobacillus fermentum).